Here is a 674-residue protein sequence, read N- to C-terminus: Leucine-rich repeat transmembrane protein FLRT1 (674 aa).

The signal sequence occupies residues 1–51; it reads MVVAHSAATATTTPAATVTATVVMTTATMDLRDWLFLCYGLIAFLTEVIDS. At 52 to 552 the chain is on the extracellular side; the sequence is TTCPSVCRCD…QNAGPMAGLP (501 aa). Disulfide bonds link C54–C60 and C58–C67. One can recognise an LRRNT domain in the interval 54-80; it reads CPSVCRCDNGFIYCNDRGLTSIPSDIP. 10 LRR repeats span residues 81–105, 106–126, 127–149, 151–175, 176–197, 198–220, 222–246, 247–269, 270–292, and 293–316; these read DDAT…LKTK, VKVQ…INLP, RSLR…SLAR, PLLE…AFAD, SKQL…SGLP, HTLE…AFKG, NSLR…TFSR, LQNL…NLPS, AHLQ…TLAK, and MREL…LFDD. N305 carries an N-linked (GlcNAc...) asparagine glycan. The LRRCT domain occupies 328–379; it reads NPWFCGCNLMWLRDWVRARAAVVNVRGLMCQGPEKVRGMAIKDITSEMDECF. C332 and C357 are joined by a disulfide. A Fibronectin type-III domain is found at 437–532; that stretch reads KTLVIQVKPL…VCAKAETADS (96 aa). Residues 553 to 573 form a helical membrane-spanning segment; the sequence is LAGIIGGAVALVFLFLVLGAI. Residues 574–674 lie on the Cytoplasmic side of the membrane; that stretch reads CWYVHRAGEL…GIPDVDYSYT (101 aa). Residues Y600, Y633, and Y671 each carry the phosphotyrosine modification.

In terms of assembly, interacts with FGFR1. Interacts (via extracellular domain) with ADGRL1/LPHN1 and ADGRL3 (via olfactomedin-like domain). Phosphorylated in response to FGFR1 signaling, but is not a direct substrate of FGFR1 or SRC. A mutant where the Tyr phosphorylation sites have been replaced by Phe displays constitutive FGFR1-dependent activation of downstream MAP kinases. Post-translationally, N-glycosylated. In terms of processing, proteolytic cleavage in the juxtamembrane region gives rise to a soluble ectodomain. In terms of tissue distribution, detected in brain (at protein level).

The protein localises to the cell membrane. The protein resides in the endoplasmic reticulum membrane. Its subcellular location is the cytoplasmic vesicle membrane. It localises to the cytoplasm. It is found in the perinuclear region. The protein localises to the cell junction. The protein resides in the focal adhesion. Its subcellular location is the secreted. It localises to the cell projection. It is found in the neuron projection. In terms of biological role, plays a role in fibroblast growth factor-mediated signaling cascades that lead to the activation of MAP kinases. Promotes neurite outgrowth via FGFR1-mediated activation of downstream MAP kinases. Promotes an increase both in neurite number and in neurite length. May play a role in cell-cell adhesion and cell guidance via its interaction with ADGRL1/LPHN1 and ADGRL3. This is Leucine-rich repeat transmembrane protein FLRT1 from Mus musculus (Mouse).